A 357-amino-acid polypeptide reads, in one-letter code: Elongation factor Ts (357 aa).

The involved in Mg(2+) ion dislocation from EF-Tu stretch occupies residues 82-85 (TDFV).

The protein belongs to the EF-Ts family.

It is found in the cytoplasm. Its function is as follows. Associates with the EF-Tu.GDP complex and induces the exchange of GDP to GTP. It remains bound to the aminoacyl-tRNA.EF-Tu.GTP complex up to the GTP hydrolysis stage on the ribosome. This Campylobacter jejuni (strain RM1221) protein is Elongation factor Ts.